The sequence spans 294 residues: Glycine--tRNA ligase alpha subunit (294 aa).

It belongs to the class-II aminoacyl-tRNA synthetase family. Tetramer of two alpha and two beta subunits.

It is found in the cytoplasm. The catalysed reaction is tRNA(Gly) + glycine + ATP = glycyl-tRNA(Gly) + AMP + diphosphate. In Sulfurovum sp. (strain NBC37-1), this protein is Glycine--tRNA ligase alpha subunit.